The chain runs to 216 residues: uncharacterized protein (216 aa).

The region spanning 125–176 is the Cupin type-2 domain; sequence YPKSTNFDSHYHDCDEYWVIIEGAGTVVVGSRSFEVEVGDCVAIGMGHHHDL.

This is an uncharacterized protein from Sinorhizobium fredii (strain NBRC 101917 / NGR234).